A 536-amino-acid chain; its full sequence is MEKFGVHNPATELATVGLGSAASVRYNFSAAALYEESIRRGEAELTAQGALRALTGQHTGRSPRDKFVVRDANTDGEIWWDNNKPLSPEHFALLRADMLAHAAGKDLFVQDLVGGAEEGHALPTRVVTEFAWHSLFIRNLLIRPETAALATFVPKLTIIDLPSFKADPARHGCRTETVIACDLTNGLVLIGGTSYAGEMKKSVFTVLNYLLPAKGVMPMHCSANVGPDGDAAVFFGLSGTGKTTLSADPARTLIGDDEHGWSENGIFNFEGGCYAKTIRLSAEAEPEIYATTQRFGTVLENVVLNEGREPNFDDGSLTENTRCAYPMHFIPNASETGRAGHPKTIIMLTADAFGVMPPIARLTPDQAMYHFLSGYTAKVAGTEKGVVEPEATFSTCFGAPFMPRHPAEYGNLLKDLISRHGVNCWLVNTGWTGGAYGTGKRMPIKATRALLAAALSGELGQVEFRADPNFGFAVPVSVNGVDGGILDPRSTWADKTAYDVQAEKLVSMFIANFAKFEDHVDGGVRDAAPGVKVAAE.

Arginine 61, tyrosine 195, and lysine 201 together coordinate substrate. ATP contacts are provided by residues lysine 201, histidine 220, and 236-244 (GLSGTGKTT). Lysine 201 and histidine 220 together coordinate Mn(2+). Mn(2+) is bound at residue aspartate 257. Residues glutamate 285, arginine 322, and threonine 447 each coordinate ATP. Residue arginine 322 coordinates substrate.

The protein belongs to the phosphoenolpyruvate carboxykinase (ATP) family. Requires Mn(2+) as cofactor.

The protein localises to the cytoplasm. The catalysed reaction is oxaloacetate + ATP = phosphoenolpyruvate + ADP + CO2. It functions in the pathway carbohydrate biosynthesis; gluconeogenesis. Involved in the gluconeogenesis. Catalyzes the conversion of oxaloacetate (OAA) to phosphoenolpyruvate (PEP) through direct phosphoryl transfer between the nucleoside triphosphate and OAA. The polypeptide is Phosphoenolpyruvate carboxykinase (ATP) (Rhizobium etli (strain CIAT 652)).